We begin with the raw amino-acid sequence, 683 residues long: Methionine--tRNA ligase (683 aa).

Residues 15 to 25 (PYANGPIHLGH) carry the 'HIGH' region motif. The Zn(2+) site is built by cysteine 146, cysteine 149, cysteine 159, and cysteine 162. Residues 332–336 (KMSKS) carry the 'KMSKS' region motif. Lysine 335 contacts ATP. The region spanning 581–683 (DFFKVDLRVA…AGAKAGQRVK (103 aa)) is the tRNA-binding domain.

The protein belongs to the class-I aminoacyl-tRNA synthetase family. MetG type 1 subfamily. In terms of assembly, homodimer. Zn(2+) is required as a cofactor.

It is found in the cytoplasm. It carries out the reaction tRNA(Met) + L-methionine + ATP = L-methionyl-tRNA(Met) + AMP + diphosphate. Is required not only for elongation of protein synthesis but also for the initiation of all mRNA translation through initiator tRNA(fMet) aminoacylation. The sequence is that of Methionine--tRNA ligase from Histophilus somni (strain 129Pt) (Haemophilus somnus).